Consider the following 645-residue polypeptide: Acetyl-coenzyme A synthetase (645 aa).

CoA contacts are provided by residues 190 to 193 (RGGR) and threonine 308. ATP contacts are provided by residues 384 to 386 (GEP), 408 to 413 (DTWWQT), aspartate 497, and arginine 512. CoA is bound at residue serine 520. Arginine 523 contacts ATP. Residues valine 534, histidine 536, and valine 539 each coordinate Mg(2+). Lysine 606 is modified (N6-acetyllysine).

This sequence belongs to the ATP-dependent AMP-binding enzyme family. Requires Mg(2+) as cofactor. Acetylated. Deacetylation by the SIR2-homolog deacetylase activates the enzyme.

The catalysed reaction is acetate + ATP + CoA = acetyl-CoA + AMP + diphosphate. Catalyzes the conversion of acetate into acetyl-CoA (AcCoA), an essential intermediate at the junction of anabolic and catabolic pathways. AcsA undergoes a two-step reaction. In the first half reaction, AcsA combines acetate with ATP to form acetyl-adenylate (AcAMP) intermediate. In the second half reaction, it can then transfer the acetyl group from AcAMP to the sulfhydryl group of CoA, forming the product AcCoA. This is Acetyl-coenzyme A synthetase from Alkalilimnicola ehrlichii (strain ATCC BAA-1101 / DSM 17681 / MLHE-1).